The following is a 56-amino-acid chain: Large ribosomal subunit protein bL32 (56 aa).

Positions 1–37 (MAVQQNKKSRSRRDMRRSHDALTTAAISVDKASGEKH) are disordered. Residues 7-16 (KKSRSRRDMR) show a composition bias toward basic residues.

It belongs to the bacterial ribosomal protein bL32 family.

The sequence is that of Large ribosomal subunit protein bL32 (rpmF) from Pasteurella multocida (strain Pm70).